The sequence spans 324 residues: Delta-aminolevulinic acid dehydratase (324 aa).

3 residues coordinate Zn(2+): C120, C122, and C130. Catalysis depends on K195, which acts as the Schiff-base intermediate with substrate. 5-aminolevulinate-binding residues include R205 and R217. E233 serves as a coordination point for Mg(2+). K248 functions as the Schiff-base intermediate with substrate in the catalytic mechanism. 5-aminolevulinate contacts are provided by S274 and Y313.

This sequence belongs to the ALAD family. As to quaternary structure, homooctamer. Zn(2+) is required as a cofactor.

The enzyme catalyses 2 5-aminolevulinate = porphobilinogen + 2 H2O + H(+). It functions in the pathway porphyrin-containing compound metabolism; protoporphyrin-IX biosynthesis; coproporphyrinogen-III from 5-aminolevulinate: step 1/4. Catalyzes an early step in the biosynthesis of tetrapyrroles. Binds two molecules of 5-aminolevulinate per subunit, each at a distinct site, and catalyzes their condensation to form porphobilinogen. In Bacillus subtilis (strain 168), this protein is Delta-aminolevulinic acid dehydratase (hemB).